The following is a 242-amino-acid chain: Ribosomal RNA small subunit methyltransferase G (242 aa).

S-adenosyl-L-methionine-binding positions include Gly82, Phe87, 133 to 134, and Arg152; that span reads AE.

Belongs to the methyltransferase superfamily. RNA methyltransferase RsmG family.

It is found in the cytoplasm. In terms of biological role, specifically methylates the N7 position of a guanine in 16S rRNA. This chain is Ribosomal RNA small subunit methyltransferase G, found in Acetivibrio thermocellus (strain ATCC 27405 / DSM 1237 / JCM 9322 / NBRC 103400 / NCIMB 10682 / NRRL B-4536 / VPI 7372) (Clostridium thermocellum).